Reading from the N-terminus, the 209-residue chain is MAGSTPAPHGDGPLVGVLALQGDVREHVRVLEGFGARTRLVRQPKDLPGISGLVIPGGESTVMDKLSRQFGIAEPLRAAIDDGLPVYGTCAGLIMLADEIVDAIHDQRGIGGLDVSVRRNAFGSQTASFEVDLDVPALGAPPVHAVFIRAPVVASVGPAASALASLDDGRVVAVRQGALLGTSFHPEVTGDLRFHRLFLDMVEDAGRTL.

Residue 58–60 (GES) participates in L-glutamine binding. Cysteine 90 acts as the Nucleophile in catalysis. L-glutamine contacts are provided by residues arginine 119 and 148–149 (IR). Active-site charge relay system residues include histidine 185 and glutamate 187.

Belongs to the glutaminase PdxT/SNO family. In the presence of PdxS, forms a dodecamer of heterodimers. Only shows activity in the heterodimer.

The enzyme catalyses aldehydo-D-ribose 5-phosphate + D-glyceraldehyde 3-phosphate + L-glutamine = pyridoxal 5'-phosphate + L-glutamate + phosphate + 3 H2O + H(+). The catalysed reaction is L-glutamine + H2O = L-glutamate + NH4(+). It functions in the pathway cofactor biosynthesis; pyridoxal 5'-phosphate biosynthesis. Catalyzes the hydrolysis of glutamine to glutamate and ammonia as part of the biosynthesis of pyridoxal 5'-phosphate. The resulting ammonia molecule is channeled to the active site of PdxS. This Clavibacter sepedonicus (Clavibacter michiganensis subsp. sepedonicus) protein is Pyridoxal 5'-phosphate synthase subunit PdxT.